The chain runs to 259 residues: ATP synthase subunit b 3 (259 aa).

A helical transmembrane segment spans residues 5-27 (WWTLGLQAINVLILIWILSRFLF).

Belongs to the ATPase B chain family. As to quaternary structure, F-type ATPases have 2 components, F(1) - the catalytic core - and F(0) - the membrane proton channel. F(1) has five subunits: alpha(3), beta(3), gamma(1), delta(1), epsilon(1). F(0) has three main subunits: a(1), b(2) and c(10-14). The alpha and beta chains form an alternating ring which encloses part of the gamma chain. F(1) is attached to F(0) by a central stalk formed by the gamma and epsilon chains, while a peripheral stalk is formed by the delta and b chains.

It localises to the cell inner membrane. F(1)F(0) ATP synthase produces ATP from ADP in the presence of a proton or sodium gradient. F-type ATPases consist of two structural domains, F(1) containing the extramembraneous catalytic core and F(0) containing the membrane proton channel, linked together by a central stalk and a peripheral stalk. During catalysis, ATP synthesis in the catalytic domain of F(1) is coupled via a rotary mechanism of the central stalk subunits to proton translocation. Its function is as follows. Component of the F(0) channel, it forms part of the peripheral stalk, linking F(1) to F(0). This chain is ATP synthase subunit b 3, found in Beijerinckia indica subsp. indica (strain ATCC 9039 / DSM 1715 / NCIMB 8712).